The sequence spans 546 residues: Chaperonin GroEL (546 aa).

ATP contacts are provided by residues 30–33, K51, 87–91, G415, 479–481, and D495; these read TLGP, DGTTT, and NAA.

The protein belongs to the chaperonin (HSP60) family. Forms a cylinder of 14 subunits composed of two heptameric rings stacked back-to-back. Interacts with the co-chaperonin GroES.

It localises to the cytoplasm. The enzyme catalyses ATP + H2O + a folded polypeptide = ADP + phosphate + an unfolded polypeptide.. In terms of biological role, together with its co-chaperonin GroES, plays an essential role in assisting protein folding. The GroEL-GroES system forms a nano-cage that allows encapsulation of the non-native substrate proteins and provides a physical environment optimized to promote and accelerate protein folding. The sequence is that of Chaperonin GroEL from Xanthomonas axonopodis pv. citri (strain 306).